Reading from the N-terminus, the 534-residue chain is Phosphoenolpyruvate carboxykinase (ATP) (534 aa).

Positions 59, 200, and 206 each coordinate substrate. Residues lysine 206, histidine 225, and 242 to 250 contribute to the ATP site; that span reads GLSGTGKTT. Mn(2+) is bound by residues lysine 206 and histidine 225. Aspartate 263 is a Mn(2+) binding site. ATP contacts are provided by residues glutamate 291, arginine 327, 443–444, and threonine 449; that span reads RI. Arginine 327 lines the substrate pocket.

It belongs to the phosphoenolpyruvate carboxykinase (ATP) family. Mn(2+) serves as cofactor.

Its subcellular location is the cytoplasm. The catalysed reaction is oxaloacetate + ATP = phosphoenolpyruvate + ADP + CO2. It participates in carbohydrate biosynthesis; gluconeogenesis. Its function is as follows. Involved in the gluconeogenesis. Catalyzes the conversion of oxaloacetate (OAA) to phosphoenolpyruvate (PEP) through direct phosphoryl transfer between the nucleoside triphosphate and OAA. The sequence is that of Phosphoenolpyruvate carboxykinase (ATP) from Agathobacter rectalis (strain ATCC 33656 / DSM 3377 / JCM 17463 / KCTC 5835 / VPI 0990) (Eubacterium rectale).